A 416-amino-acid polypeptide reads, in one-letter code: Lysosome-associated membrane glycoprotein 3 (416 aa).

Residues 1 to 27 (MPRQLSAAAVLFASLAVILHDGSQMRA) form the signal peptide. Residues 28-381 (KAFPKTRDYS…NVDECSSDYT (354 aa)) lie on the Lumenal side of the membrane. The segment at 135 to 217 (PPTITPPAHT…ASTVPGSTLA (83 aa)) is disordered. Polar residues predominate over residues 142–170 (AHTTGTSSSTVNHTTGNATQPSNQTTLPA). Residues 188 to 208 (PTHAPGTTAAAHNTTRTAAPA) show a composition bias toward low complexity. Residue asparagine 200 is glycosylated (N-linked (GlcNAc...) asparagine). Cysteine 237 and cysteine 274 are joined by a disulfide. Asparagine 291 is a glycosylation site (N-linked (GlcNAc...) asparagine). A disulfide bridge links cysteine 339 with cysteine 376. The chain crosses the membrane as a helical span at residues 382 to 402 (IVLPVIGAIVVGLCLVGMGVY). At 403-416 (KIRLRCQSSGYQRI) the chain is on the cytoplasmic side.

Belongs to the LAMP family. As to quaternary structure, monomer. Interacts with FURIN.

The protein resides in the cell surface. Its subcellular location is the lysosome membrane. It localises to the cytoplasmic vesicle membrane. It is found in the early endosome membrane. In terms of biological role, lysosomal membrane glycoprotein which plays a role in the unfolded protein response (UPR) that contributes to protein degradation and cell survival during proteasomal dysfunction. Plays a role in the process of fusion of the lysosome with the autophagosome, thereby modulating the autophagic process. Promotes hepatocellular lipogenesis through activation of the PI3K/Akt pathway. May also play a role in dendritic cell function and in adaptive immunity. The protein is Lysosome-associated membrane glycoprotein 3 (LAMP3) of Macaca mulatta (Rhesus macaque).